The following is a 306-amino-acid chain: Serine/threonine-protein phosphatase PP-X homolog 4 (306 aa).

Residues Asp-53, His-55, Asp-81, and Asn-113 each coordinate Mn(2+). The active-site Proton donor is His-114. Residues His-163 and His-237 each contribute to the Mn(2+) site.

Belongs to the PPP phosphatase family. PP-4 (PP-X) subfamily. It depends on Mn(2+) as a cofactor.

The enzyme catalyses O-phospho-L-seryl-[protein] + H2O = L-seryl-[protein] + phosphate. It carries out the reaction O-phospho-L-threonyl-[protein] + H2O = L-threonyl-[protein] + phosphate. The chain is Serine/threonine-protein phosphatase PP-X homolog 4 (Ppx4) from Paramecium tetraurelia.